Reading from the N-terminus, the 847-residue chain is FAST kinase domain-containing protein 1, mitochondrial (847 aa).

At K360 the chain carries N6-acetyllysine. Residues 777-837 enclose the RAP domain; sequence IALEFLDSKA…KDARMDYLRE (61 aa).

Belongs to the FAST kinase family. As to expression, expression detected in spleen, thymus, testis, ovary, colon, heart, smooth muscle, kidney, brain, lung, liver and white adipose tissue with highest expression in heart.

The protein resides in the mitochondrion. In terms of biological role, involved in the down-regulation of mitochondrial MT-ND3 mRNA levels which leads to decreased respiratory complex I abundance and activity. The protein is FAST kinase domain-containing protein 1, mitochondrial (FASTKD1) of Homo sapiens (Human).